The primary structure comprises 373 residues: Putative F-box/kelch-repeat protein At3g19410 (373 aa).

Residues 1-46 (MTIPELPKDLIEEILCYVPATYLKRLRSTCKGWNRLFKDDRRFAKK) enclose the F-box domain. Kelch repeat units follow at residues 101–148 (RIFH…FVLG), 149–200 (YYQE…QCVS), and 329–373 (KLYI…EEKS).

This is Putative F-box/kelch-repeat protein At3g19410 from Arabidopsis thaliana (Mouse-ear cress).